The following is a 369-amino-acid chain: Dual-specificity RNA methyltransferase RlmN (369 aa).

The active-site Proton acceptor is the Glu96. Residues 102–338 (DGERGTLCVS…VTTIRTTRGD (237 aa)) form the Radical SAM core domain. A disulfide bridge connects residues Cys109 and Cys344. Cys116, Cys120, and Cys123 together coordinate [4Fe-4S] cluster. S-adenosyl-L-methionine is bound by residues 169–170 (GE), Ser201, 223–225 (SLH), and Asn301. Catalysis depends on Cys344, which acts as the S-methylcysteine intermediate.

It belongs to the radical SAM superfamily. RlmN family. Requires [4Fe-4S] cluster as cofactor.

Its subcellular location is the cytoplasm. The catalysed reaction is adenosine(2503) in 23S rRNA + 2 reduced [2Fe-2S]-[ferredoxin] + 2 S-adenosyl-L-methionine = 2-methyladenosine(2503) in 23S rRNA + 5'-deoxyadenosine + L-methionine + 2 oxidized [2Fe-2S]-[ferredoxin] + S-adenosyl-L-homocysteine. The enzyme catalyses adenosine(37) in tRNA + 2 reduced [2Fe-2S]-[ferredoxin] + 2 S-adenosyl-L-methionine = 2-methyladenosine(37) in tRNA + 5'-deoxyadenosine + L-methionine + 2 oxidized [2Fe-2S]-[ferredoxin] + S-adenosyl-L-homocysteine. In terms of biological role, specifically methylates position 2 of adenine 2503 in 23S rRNA and position 2 of adenine 37 in tRNAs. m2A2503 modification seems to play a crucial role in the proofreading step occurring at the peptidyl transferase center and thus would serve to optimize ribosomal fidelity. This Marinobacter nauticus (strain ATCC 700491 / DSM 11845 / VT8) (Marinobacter aquaeolei) protein is Dual-specificity RNA methyltransferase RlmN.